Consider the following 51-residue polypeptide: Large ribosomal subunit protein bL33 (51 aa).

This sequence belongs to the bacterial ribosomal protein bL33 family.

The chain is Large ribosomal subunit protein bL33 from Hahella chejuensis (strain KCTC 2396).